The following is a 426-amino-acid chain: Ornithine aminotransferase (426 aa).

K291 is subject to N6-(pyridoxal phosphate)lysine.

Belongs to the class-III pyridoxal-phosphate-dependent aminotransferase family. Pyridoxal 5'-phosphate serves as cofactor.

It catalyses the reaction a 2-oxocarboxylate + L-ornithine = L-glutamate 5-semialdehyde + an L-alpha-amino acid. It functions in the pathway amino-acid biosynthesis; L-proline biosynthesis; L-glutamate 5-semialdehyde from L-ornithine: step 1/1. In Vigna aconitifolia (Moth bean), this protein is Ornithine aminotransferase.